Consider the following 149-residue polypeptide: Large ribosomal subunit protein bL9 (149 aa).

This sequence belongs to the bacterial ribosomal protein bL9 family.

In terms of biological role, binds to the 23S rRNA. This chain is Large ribosomal subunit protein bL9, found in Helicobacter pylori (strain HPAG1).